A 342-amino-acid chain; its full sequence is MKIAVLLSGGVDSSYSAYSLKEQGHELVGIYLKLHASEKKHDLYIKNAQKACEFLGIPLEVLDFQKDFKSAVYDEFISAYEEGQTPNPCALCNPLMKFGLALDHALKLGCEKIATGHYARVKEIDKVSYIQEAVDKTKDQSYFLYALEHEVIAKLVFPLGDLLKKDIKPLALNAMPFLGTLETYKESQEICFVEKSYIDTLKKHVEVEKEGVVKNLQGEVIGTHKGYMQYTIGKRKGFNIKGALEPHFVVGIDAKKNELIVGKKEDLATHSLKAKNKSLTKDFKDGEYFIKARYRSVPAKAFVSLRDEVIEVEFEEPFYGVAKGQALVVYKDDILLGGGVIV.

ATP contacts are provided by residues 6–13 (LLSGGVDS) and Leu32. The active-site Nucleophile is Cys92. A disulfide bond links Cys92 and Cys191. Gly116 contacts ATP. The interaction with tRNA stretch occupies residues 138–140 (KDQ). The active-site Cysteine persulfide intermediate is Cys191. An interaction with tRNA region spans residues 293–294 (RY).

Belongs to the MnmA/TRMU family.

Its subcellular location is the cytoplasm. It carries out the reaction S-sulfanyl-L-cysteinyl-[protein] + uridine(34) in tRNA + AH2 + ATP = 2-thiouridine(34) in tRNA + L-cysteinyl-[protein] + A + AMP + diphosphate + H(+). Catalyzes the 2-thiolation of uridine at the wobble position (U34) of tRNA, leading to the formation of s(2)U34. The polypeptide is tRNA-specific 2-thiouridylase MnmA (Helicobacter pylori (strain HPAG1)).